A 238-amino-acid chain; its full sequence is Succinate dehydrogenase assembly factor 2, mitochondrial (238 aa).

Positions 47 to 82 are disordered; that stretch reads GLKADGSRADQAEAGASQSLDKQSRTLDSVRDDTLS. Basic and acidic residues predominate over residues 68–80; the sequence is KQSRTLDSVRDDT.

Belongs to the SDHAF2 family. As to quaternary structure, interacts with the flavoprotein subunit within the SDH catalytic dimer.

It is found in the mitochondrion matrix. Plays an essential role in the assembly of succinate dehydrogenase (SDH), an enzyme complex (also referred to as respiratory complex II) that is a component of both the tricarboxylic acid (TCA) cycle and the mitochondrial electron transport chain, and which couples the oxidation of succinate to fumarate with the reduction of ubiquinone (coenzyme Q) to ubiquinol. Required for flavinylation (covalent attachment of FAD) of the flavoprotein subunit of the SDH catalytic dimer. In Mycosarcoma maydis (Corn smut fungus), this protein is Succinate dehydrogenase assembly factor 2, mitochondrial.